The primary structure comprises 722 residues: Phenylalanine ammonia-lyase lenB (722 aa).

Y83 acts as the Proton donor/acceptor in catalysis. The segment at 117–136 (LPTDRSSSRPSSRYPHGLRS) is disordered. Residues 190-192 (ASG) constitute a cross-link (5-imidazolinone (Ala-Gly)). S191 carries the post-translational modification 2,3-didehydroalanine (Ser). Positions 247, 334, 340, 370, 441, 469, and 472 each coordinate (E)-cinnamate.

The protein belongs to the PAL/histidase family. Contains an active site 4-methylidene-imidazol-5-one (MIO), which is formed autocatalytically by cyclization and dehydration of residues Ala-Ser-Gly.

The enzyme catalyses L-phenylalanine = (E)-cinnamate + NH4(+). Its pathway is alkaloid biosynthesis. Its function is as follows. Phenylalanine ammonia-lyase; part of the gene cluster that mediates the biosynthesis of the ergot alkaloids lentopeptins A and B. Within the pathway, lenB provides the cinnamic acid starter unit for the synthesis of the N-acyldiketopiperazine intermediate by the NRPS lenA. Cinnamic acid is condensed with the Ala-Val-Ala peptide chain by lenA which leads to the N-acyldiketopiperazine intermediate which in turn is converted into lentopeptins A and B by the cytochrome P450 monooxygenase lenC. In Aspergillus lentulus, this protein is Phenylalanine ammonia-lyase lenB.